A 469-amino-acid polypeptide reads, in one-letter code: UDP-N-acetylmuramate--L-alanine ligase (469 aa).

Residue 112–118 (GTHGKTT) coordinates ATP.

This sequence belongs to the MurCDEF family.

The protein localises to the cytoplasm. The catalysed reaction is UDP-N-acetyl-alpha-D-muramate + L-alanine + ATP = UDP-N-acetyl-alpha-D-muramoyl-L-alanine + ADP + phosphate + H(+). It participates in cell wall biogenesis; peptidoglycan biosynthesis. Cell wall formation. The sequence is that of UDP-N-acetylmuramate--L-alanine ligase from Herminiimonas arsenicoxydans.